Here is a 317-residue protein sequence, read N- to C-terminus: L-lactate dehydrogenase (317 aa).

NAD(+) is bound by residues 16–17 (FV), D38, K43, Y69, and 83–84 (GA). The substrate site is built by Q86 and R92. NAD(+) is bound by residues S105, 122–124 (ATN), and S147. 124–127 (NPVD) provides a ligand contact to substrate. 152–155 (DTAR) serves as a coordination point for substrate. Residues R157 and 169 to 172 (QNVH) contribute to the beta-D-fructose 1,6-bisphosphate site. The active-site Proton acceptor is the H179. At Y224 the chain carries Phosphotyrosine. T233 lines the substrate pocket.

It belongs to the LDH/MDH superfamily. LDH family. As to quaternary structure, exists as a dimer and a tetramer (dimer of dimers). The conversion occurs via the binding of fructose 1,6-bisphosphate (FBP) to the dimer.

The protein resides in the cytoplasm. The catalysed reaction is (S)-lactate + NAD(+) = pyruvate + NADH + H(+). It functions in the pathway fermentation; pyruvate fermentation to lactate; (S)-lactate from pyruvate: step 1/1. Its activity is regulated as follows. Allosterically activated by fructose 1,6-bisphosphate (FBP). The improvement in affinity for substrate occurs in two steps; the binding of fructose 1,6-bisphosphate (FBP) to the dimer, and the dimer to tetramer conversion. Functionally, catalyzes the conversion of lactate to pyruvate. In Geobacillus stearothermophilus (Bacillus stearothermophilus), this protein is L-lactate dehydrogenase.